Reading from the N-terminus, the 193-residue chain is ATP-dependent Clp protease proteolytic subunit (193 aa).

Ser98 serves as the catalytic Nucleophile. His123 is a catalytic residue.

Belongs to the peptidase S14 family. In terms of assembly, fourteen ClpP subunits assemble into 2 heptameric rings which stack back to back to give a disk-like structure with a central cavity, resembling the structure of eukaryotic proteasomes.

The protein resides in the cytoplasm. The catalysed reaction is Hydrolysis of proteins to small peptides in the presence of ATP and magnesium. alpha-casein is the usual test substrate. In the absence of ATP, only oligopeptides shorter than five residues are hydrolyzed (such as succinyl-Leu-Tyr-|-NHMec, and Leu-Tyr-Leu-|-Tyr-Trp, in which cleavage of the -Tyr-|-Leu- and -Tyr-|-Trp bonds also occurs).. In terms of biological role, cleaves peptides in various proteins in a process that requires ATP hydrolysis. Has a chymotrypsin-like activity. Plays a major role in the degradation of misfolded proteins. ClpXP is involved in the complete degradation of the Site-2 clipped anti-sigma-W factor RsiW. This results in the release of SigW and the transcription activation of the genes under the control of the sigma-W factor. The polypeptide is ATP-dependent Clp protease proteolytic subunit (Oceanobacillus iheyensis (strain DSM 14371 / CIP 107618 / JCM 11309 / KCTC 3954 / HTE831)).